Consider the following 526-residue polypeptide: Glutamyl-tRNA(Gln) amidotransferase subunit A, mitochondrial (526 aa).

Residue lysine 76 is the Charge relay system of the active site. The tract at residues 147–166 (QYREKRKQNSHSENEDSNWL) is disordered. Residue serine 171 is the Charge relay system of the active site. The active-site Acyl-ester intermediate is the serine 195.

The protein belongs to the amidase family. GatA subfamily. In terms of assembly, subunit of the heterotrimeric GatCAB amidotransferase (AdT) complex, composed of A (QRSL1), B (GATB) and C (GATC) subunits.

The protein resides in the mitochondrion. The catalysed reaction is L-glutamyl-tRNA(Gln) + L-glutamine + ATP + H2O = L-glutaminyl-tRNA(Gln) + L-glutamate + ADP + phosphate + H(+). In terms of biological role, allows the formation of correctly charged Gln-tRNA(Gln) through the transamidation of misacylated Glu-tRNA(Gln) in the mitochondria. The reaction takes place in the presence of glutamine and ATP through an activated gamma-phospho-Glu-tRNA(Gln). This chain is Glutamyl-tRNA(Gln) amidotransferase subunit A, mitochondrial, found in Bos taurus (Bovine).